A 171-amino-acid chain; its full sequence is Peptide deformylase (171 aa).

2 residues coordinate Fe cation: C87 and H129. E130 is an active-site residue. Position 133 (H133) interacts with Fe cation.

This sequence belongs to the polypeptide deformylase family. Fe(2+) serves as cofactor.

The catalysed reaction is N-terminal N-formyl-L-methionyl-[peptide] + H2O = N-terminal L-methionyl-[peptide] + formate. Its function is as follows. Removes the formyl group from the N-terminal Met of newly synthesized proteins. Requires at least a dipeptide for an efficient rate of reaction. N-terminal L-methionine is a prerequisite for activity but the enzyme has broad specificity at other positions. The polypeptide is Peptide deformylase (Pseudothermotoga lettingae (strain ATCC BAA-301 / DSM 14385 / NBRC 107922 / TMO) (Thermotoga lettingae)).